Here is a 741-residue protein sequence, read N- to C-terminus: Double-stranded RNA-specific editase 1 (741 aa).

The tract at residues 1–79 (MDIEDEENMS…RRKTPGPVLP (79 aa)) is disordered. At serine 26 the chain carries Phosphoserine. Positions 33 to 49 (PGPGEGSQLSNGGGGGP) are enriched in gly residues. A compositionally biased stretch (basic residues) spans 63–73 (SKYRLKKRRKT). Residues 78–144 (LPKNALMQLN…AEKALRSFVQ (67 aa)) form the DRBM 1 domain. Interaction with substrate RNA stretches follow at residues 83-88 (LMQLNE) and 104-105 (VH). Phosphoserine is present on serine 149. The DRBM 2 domain occupies 231–298 (PSGKNPVMIL…AQSALAAIFN (68 aa)). 2 interaction with substrate RNA regions span residues 237-242 (VMILNE) and histidine 259. In terms of domain architecture, A to I editase spans 370–737 (SVSTGTKCIN…VEKPTEQDQF (368 aa)). Histidine 394 contacts Zn(2+). The active-site Proton donor is glutamate 396. Positions 400 and 401 each coordinate 1D-myo-inositol hexakisphosphate. Position 451 (cysteine 451) interacts with Zn(2+). The segment at 486–518 (RPPGLLSDPSTSTFQGAGTTEPADRHPNRKARG) is disordered. Positions 493–503 (DPSTSTFQGAG) are enriched in polar residues. Zn(2+) is bound at residue cysteine 556. Positions 559, 562, 669, 702, 712, and 730 each coordinate 1D-myo-inositol hexakisphosphate.

As to quaternary structure, homodimer. Homodimerization is essential for its catalytic activity. Can form heterodimers with isoform 5 of ADAR/ADAR1. It depends on 1D-myo-inositol hexakisphosphate as a cofactor. Highly expressed in brain and heart and at lower levels in placenta. Fair expression in lung, liver and kidney. Detected in brain, heart, kidney, lung and liver (at protein level). In terms of tissue distribution, highly expressed in hippocampus and colon. Expressed in pediatric astrocytomas and the protein has a decreased RNA-editing activity. The decrease in RNA editing correlates with the grade of malignancy of the tumors, with the high grade tumors showing lower editing is seen.

It is found in the nucleus. The protein localises to the nucleolus. It catalyses the reaction adenosine in double-stranded RNA + H2O + H(+) = inosine in double-stranded RNA + NH4(+). Its function is as follows. Catalyzes the hydrolytic deamination of adenosine to inosine in double-stranded RNA (dsRNA) referred to as A-to-I RNA editing. This may affect gene expression and function in a number of ways that include mRNA translation by changing codons and hence the amino acid sequence of proteins; pre-mRNA splicing by altering splice site recognition sequences; RNA stability by changing sequences involved in nuclease recognition; genetic stability in the case of RNA virus genomes by changing sequences during viral RNA replication; and RNA structure-dependent activities such as microRNA production or targeting or protein-RNA interactions. Can edit both viral and cellular RNAs and can edit RNAs at multiple sites (hyper-editing) or at specific sites (site-specific editing). Its cellular RNA substrates include: bladder cancer-associated protein (BLCAP), neurotransmitter receptors for glutamate (GRIA2 and GRIK2) and serotonin (HTR2C), GABA receptor (GABRA3) and potassium voltage-gated channel (KCNA1). Site-specific RNA editing of transcripts encoding these proteins results in amino acid substitutions which consequently alter their functional activities. Edits GRIA2 at both the Q/R and R/G sites efficiently but converts the adenosine in hotspot1 much less efficiently. Can exert a proviral effect towards human immunodeficiency virus type 1 (HIV-1) and enhances its replication via both an editing-dependent and editing-independent mechanism. The former involves editing of adenosines in the 5'UTR while the latter occurs via suppression of EIF2AK2/PKR activation and function. Can inhibit cell proliferation and migration and can stimulate exocytosis. Has a lower catalytic activity than isoform 2. In terms of biological role, has a higher catalytic activity than isoform 1. This is Double-stranded RNA-specific editase 1 from Homo sapiens (Human).